A 305-amino-acid chain; its full sequence is Coenzyme PQQ synthesis protein B (305 aa).

Belongs to the PqqB family.

It functions in the pathway cofactor biosynthesis; pyrroloquinoline quinone biosynthesis. Its function is as follows. May be involved in the transport of PQQ or its precursor to the periplasm. In Cupriavidus necator (strain ATCC 17699 / DSM 428 / KCTC 22496 / NCIMB 10442 / H16 / Stanier 337) (Ralstonia eutropha), this protein is Coenzyme PQQ synthesis protein B.